Here is a 429-residue protein sequence, read N- to C-terminus: Fc receptor-like protein 1 (429 aa).

The first 16 residues, 1–16 (MLPRLLLLICAPLCEP), serve as a signal peptide directing secretion. Ig-like C2-type domains lie at 17–104 (AELF…SQIN), 109–200 (PVAD…VSIT), and 208–291 (PILM…EAVT). The Extracellular segment spans residues 17–307 (AELFLIASPS…TGARSNHLTS (291 aa)). Disulfide bonds link cysteine 38–cysteine 86, cysteine 134–cysteine 183, and cysteine 229–cysteine 276. The N-linked (GlcNAc...) asparagine glycan is linked to asparagine 293. Residues 308–328 (GVIEGLLSTLGPATVALLFCY) form a helical membrane-spanning segment. The Cytoplasmic segment spans residues 329–429 (GLKRKIGRRS…ITDVDYEDAM (101 aa)). 5 short sequence motifs (ITIM motif) span residues 354–359 (FTYLNS), 367–372 (PIYENV), 379–384 (EVYSLA), 410–415 (DIYSRL), and 423–428 (VDYEDA).

Interacts with ABL1. Interacts with GRB2 and SOS1. Interacts with SHIP-1/INPP5D. In terms of processing, phosphorylated on tyrosines upon activation. Primarily expressed in secondary lymphoid tissues by mature subsets of B-cells. Detected in spleen, lymph node, heart, skeletal muscle, kidney, liver and placenta. Specifically expressed by mature B lineage cells with higher expression in naive versus memory B-cells (at protein level).

The protein localises to the cell membrane. In terms of biological role, type I transmembrane surface glycoprotein preferentially expressed by B-cells that regulates BCR-mediated signaling responses. Recruits ABL1 as the intracellular effector molecule to enhance B-cell activation. Also plays a negative role by suppressing ERK activation under homeostatic and BCR-stimulated conditions in a GRB2-dependent manner. This is Fc receptor-like protein 1 (FCRL1) from Homo sapiens (Human).